Here is a 302-residue protein sequence, read N- to C-terminus: Tyrosine recombinase XerC (302 aa).

The 88-residue stretch at 2–89 (QPLMEQIRAF…AIRSFYRHLL (88 aa)) folds into the Core-binding (CB) domain. The 180-residue stretch at 110–289 (RLPFHLDIDQ…SLDRLMEVYD (180 aa)) folds into the Tyr recombinase domain. Catalysis depends on residues arginine 150, lysine 174, histidine 241, arginine 244, and histidine 267. Residue tyrosine 276 is the O-(3'-phospho-DNA)-tyrosine intermediate of the active site.

Belongs to the 'phage' integrase family. XerC subfamily. Forms a cyclic heterotetrameric complex composed of two molecules of XerC and two molecules of XerD.

The protein localises to the cytoplasm. Site-specific tyrosine recombinase, which acts by catalyzing the cutting and rejoining of the recombining DNA molecules. The XerC-XerD complex is essential to convert dimers of the bacterial chromosome into monomers to permit their segregation at cell division. It also contributes to the segregational stability of plasmids. The sequence is that of Tyrosine recombinase XerC from Pelobacter propionicus (strain DSM 2379 / NBRC 103807 / OttBd1).